Consider the following 393-residue polypeptide: Double-stranded RNA-binding protein 5 (393 aa).

DRBM domains lie at 1–70 (MYKN…VLSS) and 87–155 (IYKN…SLKK). Disordered regions lie at residues 220-251 (ASSS…KSSK) and 335-371 (NPNL…QEKK). Positions 347–361 (VNEFTSSNNSCSVLN) are enriched in polar residues.

Heterodimer with DRB1, DRB2 or DRB4. Interacts with DCL1 and DCL3. Expressed in the shoot apical meristem (SAM).

Its function is as follows. Binds double-stranded RNA. May be involved in RNA-mediated silencing. The polypeptide is Double-stranded RNA-binding protein 5 (DRB5) (Arabidopsis thaliana (Mouse-ear cress)).